Here is a 113-residue protein sequence, read N- to C-terminus: Tubulin-folding cofactor A (113 aa).

The interval 83–113 (LEETDEKEGPEIEDAKKTVADVEKQFPTEDA) is disordered. The segment covering 89–113 (KEGPEIEDAKKTVADVEKQFPTEDA) has biased composition (basic and acidic residues).

Belongs to the TBCA family. Monomer. Supercomplex made of cofactors A to E. Cofactors A and D function by capturing and stabilizing tubulin in a quasi-native conformation. Cofactor E binds to the cofactor D-tubulin complex; interaction with cofactor C then causes the release of tubulin polypeptides that are committed to the native state. Interacts with TUBB9. Expressed in leaves, roots, flowers and stems.

Its function is as follows. Tubulin-folding protein involved in the control of the alpha-/beta-tubulin monomer balance. Functions as a reservoir of bound and non-toxic beta-tubulin. Required in the developing embryo. This chain is Tubulin-folding cofactor A (TFCA), found in Arabidopsis thaliana (Mouse-ear cress).